The following is a 484-amino-acid chain: Cathepsin F (484 aa).

A signal peptide spans 1–19 (MAPWLQLLSLLGLLPGAVA). A propeptide spans 20-270 (APAQPRAASF…MKQAKSVGDL (251 aa)) (activation peptide). 2 N-linked (GlcNAc...) asparagine glycosylation sites follow: N160 and N195. Cystine bridges form between C292–C333 and C326–C366. C295 is a catalytic residue. 2 N-linked (GlcNAc...) asparagine glycosylation sites follow: N367 and N378. The cysteines at positions 424 and 472 are disulfide-linked. Residue H431 is part of the active site. N440 carries an N-linked (GlcNAc...) asparagine glycan. The active site involves N451.

This sequence belongs to the peptidase C1 family. High expression levels in heart, skeletal muscle, brain, testis and ovary; moderate levels in prostate, placenta, liver and colon; and no detectable expression in peripheral leukocytes and thymus.

The protein localises to the lysosome. The catalysed reaction is The recombinant enzyme cleaves synthetic substrates with Phe and Leu (better than Val) in P2, with high specificity constant (kcat/Km) comparable to that of cathepsin L.. In terms of biological role, thiol protease which is believed to participate in intracellular degradation and turnover of proteins. Has also been implicated in tumor invasion and metastasis. The protein is Cathepsin F (CTSF) of Homo sapiens (Human).